The primary structure comprises 450 residues: Acyltransferase GLAUCE (450 aa).

Active-site proton acceptor residues include His171 and Glu394.

It belongs to the plant acyltransferase family. Restricted to the central cells of embryo sacs.

The protein resides in the cytoplasm. Its subcellular location is the nucleus. Its function is as follows. Required for double fertilization of the egg cell and the central cell by two sperm cells, resulting in the formation of the embryo and the endosperm. Involved in the regulation of embryonic expression of PHE1. Essential in maternal tissues to ensure the paternal embryonic expression of several genes, including RPS5a and FAC1, both of which being essential for early embryo and endosperm development in fertilized seeds. The sequence is that of Acyltransferase GLAUCE from Arabidopsis thaliana (Mouse-ear cress).